The following is a 262-amino-acid chain: Urease accessory protein UreD (262 aa).

This sequence belongs to the UreD family. UreD, UreF and UreG form a complex that acts as a GTP-hydrolysis-dependent molecular chaperone, activating the urease apoprotein by helping to assemble the nickel containing metallocenter of UreC. The UreE protein probably delivers the nickel.

The protein localises to the cytoplasm. Its function is as follows. Required for maturation of urease via the functional incorporation of the urease nickel metallocenter. The chain is Urease accessory protein UreD from Acetivibrio thermocellus (strain ATCC 27405 / DSM 1237 / JCM 9322 / NBRC 103400 / NCIMB 10682 / NRRL B-4536 / VPI 7372) (Clostridium thermocellum).